We begin with the raw amino-acid sequence, 440 residues long: Xylose isomerase (440 aa).

Residues H101 and D104 contribute to the active site. The Mg(2+) site is built by E232, E268, H271, D296, D307, D309, and D339.

It belongs to the xylose isomerase family. As to quaternary structure, homotetramer. The cofactor is Mg(2+).

It localises to the cytoplasm. It carries out the reaction alpha-D-xylose = alpha-D-xylulofuranose. The chain is Xylose isomerase from Salmonella dublin (strain CT_02021853).